The following is a 360-amino-acid chain: Phosphoserine aminotransferase (360 aa).

Residue Arg-41 coordinates L-glutamate. The pyridoxal 5'-phosphate site is built by Trp-101, Thr-152, Asp-172, and Gln-195. The residue at position 196 (Lys-196) is an N6-(pyridoxal phosphate)lysine. 237–238 (NT) serves as a coordination point for pyridoxal 5'-phosphate.

The protein belongs to the class-V pyridoxal-phosphate-dependent aminotransferase family. SerC subfamily. As to quaternary structure, homodimer. The cofactor is pyridoxal 5'-phosphate.

The protein localises to the cytoplasm. The enzyme catalyses O-phospho-L-serine + 2-oxoglutarate = 3-phosphooxypyruvate + L-glutamate. It catalyses the reaction 4-(phosphooxy)-L-threonine + 2-oxoglutarate = (R)-3-hydroxy-2-oxo-4-phosphooxybutanoate + L-glutamate. Its pathway is amino-acid biosynthesis; L-serine biosynthesis; L-serine from 3-phospho-D-glycerate: step 2/3. It functions in the pathway cofactor biosynthesis; pyridoxine 5'-phosphate biosynthesis; pyridoxine 5'-phosphate from D-erythrose 4-phosphate: step 3/5. Its function is as follows. Catalyzes the reversible conversion of 3-phosphohydroxypyruvate to phosphoserine and of 3-hydroxy-2-oxo-4-phosphonooxybutanoate to phosphohydroxythreonine. The sequence is that of Phosphoserine aminotransferase from Burkholderia multivorans (strain ATCC 17616 / 249).